A 314-amino-acid chain; its full sequence is Olfactory receptor 5D13 (314 aa).

Residues 1 to 27 (MMASERNQSSTPTFILLGFSEYPEIQV) lie on the Extracellular side of the membrane. Asn7 carries N-linked (GlcNAc...) asparagine glycosylation. A helical membrane pass occupies residues 28 to 48 (PLFLVFLFVYTVTVVGNLGMI). Residues 49–56 (IIIRLNSK) lie on the Cytoplasmic side of the membrane. A helical transmembrane segment spans residues 57-77 (LHTIMCFFLSHLSLTDFCFST). The Extracellular segment spans residues 78-101 (VVTPKLLENLVVEYRTISFSGCIM). The chain crosses the membrane as a helical span at residues 102–122 (QFCFACIFGVTETFMLAAMAY). Topologically, residues 123–141 (DRFVAVCKPLLYTTIMSQK) are cytoplasmic. Residues 142-162 (LCALLVAGSYTWGIVCSLILT) form a helical membrane-spanning segment. Over 163 to 198 (YFLLDLSFCESTFINNFICDHSVIVSASYSDPYISQ) the chain is Extracellular. The chain crosses the membrane as a helical span at residues 199 to 219 (RLCFIIAIFNEVSSLIIILTS). The Cytoplasmic segment spans residues 220–239 (YMLIFTTIMKMRSASGRQKT). A helical transmembrane segment spans residues 240 to 260 (FSTCASHLTAITIFHGTILFL). The Extracellular segment spans residues 261-273 (YCVPNPKTSSLIV). A helical membrane pass occupies residues 274 to 294 (TVASVFYTVAIPMLNPLIYSL). Residues 295–314 (RNKDINNMFEKLVVTKLIYH) lie on the Cytoplasmic side of the membrane.

Belongs to the G-protein coupled receptor 1 family.

It is found in the cell membrane. In terms of biological role, odorant receptor. This chain is Olfactory receptor 5D13 (OR5D13), found in Homo sapiens (Human).